Here is an 824-residue protein sequence, read N- to C-terminus: Neuronal PAS domain-containing protein 2 (824 aa).

Residues M1 to K10 are compositionally biased toward basic and acidic residues. The tract at residues M1–R21 is disordered. The tract at residues M1–E61 is sufficient for heterodimer formation with BMAL1, E-box binding and for the effect of NADPH. The 51-residue stretch at A9–H59 folds into the bHLH domain. One can recognise a PAS 1 domain in the interval N82–T152. Heme b contacts are provided by H119 and H171. Positions F237–G307 constitute a PAS 2 domain. The PAC domain maps to S311–A354. Disordered stretches follow at residues E367–A437, S556–S667, Q681–K704, and P739–R824. The segment covering A378–Q390 has biased composition (basic and acidic residues). The span at T421–T431 shows a compositional bias: polar residues. A compositionally biased stretch (low complexity) spans Q559 to Q576. The span at G587–G610 shows a compositional bias: polar residues. Residues M614–S636 show a composition bias toward low complexity. 2 stretches are compositionally biased toward polar residues: residues L645–P664 and S694–K704. Residues P739 to Q760 are compositionally biased toward low complexity. Residues Q766–G789 are compositionally biased toward polar residues. The segment covering P794–R805 has biased composition (pro residues). Residues R809–R824 show a composition bias toward low complexity.

In terms of assembly, component of the circadian clock oscillator which includes the CRY proteins, CLOCK or NPAS2, BMAL1 or BMAL2, CSNK1D and/or CSNK1E, TIMELESS and the PER proteins. Efficient DNA binding requires dimerization with another bHLH protein. Forms a heterodimer with BMAL1 and this heterodimerization is required for E-box-dependent transactivation. Interacts with NCOA3, KAT2B, CREBBP and EP300. It depends on heme as a cofactor.

The protein localises to the nucleus. With respect to regulation, carbon monoxide (CO) and the redox state of the cell can modulate the transcriptional activity of the NPAS2-BMAL1 heterodimer. NADH and NADPH enhance the DNA-binding activity of the heterodimer whereas CO binds the heme group in NPAS2 and inhibits the DNA-binding activity of the heterodimer. Its function is as follows. Transcriptional activator which forms a core component of the circadian clock. The circadian clock, an internal time-keeping system, regulates various physiological processes through the generation of approximately 24 hour circadian rhythms in gene expression, which are translated into rhythms in metabolism and behavior. It is derived from the Latin roots 'circa' (about) and 'diem' (day) and acts as an important regulator of a wide array of physiological functions including metabolism, sleep, body temperature, blood pressure, endocrine, immune, cardiovascular, and renal function. Consists of two major components: the central clock, residing in the suprachiasmatic nucleus (SCN) of the brain, and the peripheral clocks that are present in nearly every tissue and organ system. Both the central and peripheral clocks can be reset by environmental cues, also known as Zeitgebers (German for 'timegivers'). The predominant Zeitgeber for the central clock is light, which is sensed by retina and signals directly to the SCN. The central clock entrains the peripheral clocks through neuronal and hormonal signals, body temperature and feeding-related cues, aligning all clocks with the external light/dark cycle. Circadian rhythms allow an organism to achieve temporal homeostasis with its environment at the molecular level by regulating gene expression to create a peak of protein expression once every 24 hours to control when a particular physiological process is most active with respect to the solar day. Transcription and translation of core clock components (CLOCK, NPAS2, BMAL1, BMAL2, PER1, PER2, PER3, CRY1 and CRY2) plays a critical role in rhythm generation, whereas delays imposed by post-translational modifications (PTMs) are important for determining the period (tau) of the rhythms (tau refers to the period of a rhythm and is the length, in time, of one complete cycle). A diurnal rhythm is synchronized with the day/night cycle, while the ultradian and infradian rhythms have a period shorter and longer than 24 hours, respectively. Disruptions in the circadian rhythms contribute to the pathology of cardiovascular diseases, cancer, metabolic syndromes and aging. A transcription/translation feedback loop (TTFL) forms the core of the molecular circadian clock mechanism. Transcription factors, CLOCK or NPAS2 and BMAL1 or BMAL2, form the positive limb of the feedback loop, act in the form of a heterodimer and activate the transcription of core clock genes and clock-controlled genes (involved in key metabolic processes), harboring E-box elements (5'-CACGTG-3') within their promoters. The core clock genes: PER1/2/3 and CRY1/2 which are transcriptional repressors form the negative limb of the feedback loop and interact with the CLOCK|NPAS2-BMAL1|BMAL2 heterodimer inhibiting its activity and thereby negatively regulating their own expression. This heterodimer also activates nuclear receptors NR1D1/2 and RORA/B/G, which form a second feedback loop and which activate and repress BMAL1 transcription, respectively. The NPAS2-BMAL1 heterodimer positively regulates the expression of MAOA, F7 and LDHA and modulates the circadian rhythm of daytime contrast sensitivity by regulating the rhythmic expression of adenylate cyclase type 1 (ADCY1) in the retina. NPAS2 plays an important role in sleep homeostasis and in maintaining circadian behaviors in normal light/dark and feeding conditions and in the effective synchronization of feeding behavior with scheduled food availability. Regulates the gene transcription of key metabolic pathways in the liver and is involved in DNA damage response by regulating several cell cycle and DNA repair genes. Controls the circadian rhythm of NR0B2 expression by binding rhythmically to its promoter. Mediates the diurnal variation in the expression of GABARA1 receptor in the brain and contributes to the regulation of anxiety-like behaviors and GABAergic neurotransmission in the ventral striatum. This chain is Neuronal PAS domain-containing protein 2 (NPAS2), found in Homo sapiens (Human).